Consider the following 447-residue polypeptide: Thiol-specific monooxygenase (447 aa).

FAD-binding positions include 13–17 (GAGPS), Glu38, 46–47 (VW), 91–92 (NT), and 137–138 (DV). 90 to 91 (TN) contributes to the NADP(+) binding site. 223–226 (SAND) lines the NADP(+) pocket.

The protein belongs to the FMO family. As to quaternary structure, monomer. It depends on FAD as a cofactor.

Flavin-dependent oxidation of thiol-containing compounds. Probably required for the correct folding of disulfide-bonded proteins. The protein is Thiol-specific monooxygenase (fmo1) of Schizosaccharomyces pombe (strain 972 / ATCC 24843) (Fission yeast).